Consider the following 422-residue polypeptide: Serine protease HTRA2, mitochondrial (422 aa).

A mitochondrion-targeting transit peptide spans 1 to 17; that stretch reads MALRGSHRLEVIFKRCI. Residues 18-74 constitute a propeptide that is removed on maturation; the sequence is ASPVFHSHAANRRSSQLAIKGTDPSSNGNSGQDQQNGEQKAKGWRRLVRFFVPFSLG. Polar residues predominate over residues 29–55; it reads RRSSQLAIKGTDPSSNGNSGQDQQNGE. The tract at residues 29-56 is disordered; it reads RRSSQLAIKGTDPSSNGNSGQDQQNGEQ. A helical transmembrane segment spans residues 64 to 82; it reads LVRFFVPFSLGAAVSAAVI. 2 short sequence motifs (IAP-binding) span residues 75–78 and 94–97; these read AAVS and SKMT. Residues 139–302 are serine protease; that stretch reads SNGSGFIIEQ…IPIDYVKVFL (164 aa). Active-site charge relay system residues include His-157, Asp-189, and Ser-266. The region spanning 325 to 410 is the PDZ domain; it reads MGITMLTLTP…NLDIVILRGV (86 aa).

The protein belongs to the peptidase S1C family. As to quaternary structure, interacts with th/DIAP1 (via BIR 2 domain).

It localises to the mitochondrion intermembrane space. The protein resides in the mitochondrion membrane. It catalyses the reaction Cleavage of non-polar aliphatic amino-acids at the P1 position, with a preference for Val, Ile and Met. At the P2 and P3 positions, Arg is selected most strongly with a secondary preference for other hydrophilic residues.. Its function is as follows. Serine protease that shows proteolytic activity against a non-specific substrate beta-casein. Promotes or induces cell death either by direct binding to and inhibition of BIRC proteins (also called inhibitor of apoptosis proteins, IAPs), leading to an increase in caspase activity, or by a BIRC inhibition-independent, caspase-independent and serine protease activity-dependent mechanism. Can antagonize antiapoptotic activity of th/Diap1 by directly inducing the degradation of th/Diap1. The protein is Serine protease HTRA2, mitochondrial of Drosophila yakuba (Fruit fly).